A 352-amino-acid polypeptide reads, in one-letter code: ATPase GET3 (352 aa).

Residue 26 to 33 (KGGVGKTT) participates in ATP binding. Asp-57 is a catalytic residue. Residues Glu-243 and Asn-270 each coordinate ATP. Cys-283 and Cys-286 together coordinate Zn(2+).

Belongs to the arsA ATPase family. As to quaternary structure, homodimer. Component of the Golgi to ER traffic (GET) complex, which is composed of GET1, GET2 and GET3. Within the complex, GET1 and GET2 form a heterotetramer which is stabilized by phosphatidylinositol binding and which binds to the GET3 homodimer. Interacts with the chloride channel protein GEF1.

It localises to the cytoplasm. The protein resides in the endoplasmic reticulum. The protein localises to the golgi apparatus. Functionally, ATPase required for the post-translational delivery of tail-anchored (TA) proteins to the endoplasmic reticulum. Recognizes and selectively binds the transmembrane domain of TA proteins in the cytosol. This complex then targets to the endoplasmic reticulum by membrane-bound receptors GET1 and GET2, where the tail-anchored protein is released for insertion. This process is regulated by ATP binding and hydrolysis. ATP binding drives the homodimer towards the closed dimer state, facilitating recognition of newly synthesized TA membrane proteins. ATP hydrolysis is required for insertion. Subsequently, the homodimer reverts towards the open dimer state, lowering its affinity for the GET1-GET2 receptor, and returning it to the cytosol to initiate a new round of targeting. Cooperates with the HDEL receptor ERD2 to mediate the ATP-dependent retrieval of resident ER proteins that contain a C-terminal H-D-E-L retention signal from the Golgi to the ER. Involved in low-level resistance to the oxyanions arsenite and arsenate, and in heat tolerance. In Vanderwaltozyma polyspora (strain ATCC 22028 / DSM 70294 / BCRC 21397 / CBS 2163 / NBRC 10782 / NRRL Y-8283 / UCD 57-17) (Kluyveromyces polysporus), this protein is ATPase GET3.